The primary structure comprises 811 residues: Lysine-specific histone demethylase 1 homolog 3 (811 aa).

Residues 1–10 (MSDQPPPYTP) are compositionally biased toward pro residues. Residues 1–79 (MSDQPPPYTP…PSAQPPPRAS (79 aa)) are disordered. Positions 44–55 (NKRKRTGFRRKL) are enriched in basic residues. Over residues 56-71 (PSGSPAAPVAVAASPS) the composition is skewed to low complexity. In terms of domain architecture, SWIRM spans 88-189 (NREPTAEAVT…FGVAPAIKER (102 aa)). The FAD site is built by Glu-227, Arg-229, Arg-235, and Glu-609. The tract at residues 790 to 811 (RNSSRTKTRPSKLKIGIPKSKS) is disordered.

Belongs to the flavin monoamine oxidase family. Requires FAD as cofactor.

In terms of biological role, probable histone demethylase. The protein is Lysine-specific histone demethylase 1 homolog 3 of Oryza sativa subsp. indica (Rice).